Consider the following 115-residue polypeptide: Hydrogenase maturation factor HypA (115 aa).

A Ni(2+)-binding site is contributed by histidine 2. Zn(2+)-binding residues include cysteine 74, cysteine 77, cysteine 90, and cysteine 93.

The protein belongs to the HypA/HybF family.

In terms of biological role, involved in the maturation of [NiFe] hydrogenases. Required for nickel insertion into the metal center of the hydrogenase. The chain is Hydrogenase maturation factor HypA from Desulfosudis oleivorans (strain DSM 6200 / JCM 39069 / Hxd3) (Desulfococcus oleovorans).